The chain runs to 473 residues: Hyaluronidase-2 (473 aa).

Residues 1–20 (MRAGPGPTVTLALVLAVSWA) form the signal peptide. Disulfide bonds link Cys47-Cys340 and Cys211-Cys227. N-linked (GlcNAc...) asparagine glycans are attached at residues Asn74 and Asn103. Catalysis depends on Glu135, which acts as the Proton donor. Asn357 carries N-linked (GlcNAc...) asparagine glycosylation. The EGF-like domain occupies 361–439 (ATQYCSRAQC…YLGWSGEQCQ (79 aa)). Disulfide bonds link Cys365–Cys376, Cys370–Cys427, and Cys429–Cys438. Gly448 carries GPI-anchor amidated glycine lipidation. Residues 449 to 473 (ASEAWAGSHLTSLLALAALAFTWTL) constitute a propeptide, removed in mature form.

Belongs to the glycosyl hydrolase 56 family. As to quaternary structure, interacts with MST1R. Widely expressed (at protein level).

It localises to the cell membrane. It catalyses the reaction Random hydrolysis of (1-&gt;4)-linkages between N-acetyl-beta-D-glucosamine and D-glucuronate residues in hyaluronate.. Functionally, catalyzes hyaluronan degradation into small fragments that are endocytosed and degraded in lysosomes by HYAL1 and exoglycosidases. Essential for the breakdown of extracellular matrix hyaluronan. The polypeptide is Hyaluronidase-2 (HYAL2) (Homo sapiens (Human)).